Here is a 293-residue protein sequence, read N- to C-terminus: Actin-related protein 2/3 complex subunit 2 (293 aa).

This sequence belongs to the ARPC2 family. Component of the Arp2/3 complex composed of arpB/Arp2, arpC/Arp3, arcA/p41-arc, arcB/p34-arc, arcC/p21-arc, arcD/p20-arc and arcE/p16-arc. Interacts with carmil (via the region between the LRR domain and COOH-terminal proline-rich domain); carmil is required for Arp2/3-dependent actin nucleation. Arp2/3 complex, MyoB, MyoC, and the alpha and beta subunits of capping protein all form a larger complex with carmil.

It localises to the cytoplasm. The protein resides in the cytoskeleton. The protein localises to the cell projection. It is found in the cytosol. Its subcellular location is the cell cortex. It localises to the pseudopodium. Its function is as follows. Functions as a component of the Arp2/3 complex which is involved in regulation of actin polymerization and together with an activating nucleation-promoting factor (NPF) mediates the formation of branched actin networks. Seems to contact the pointed end of the daughter actin filament. The Arp2/3 complex is involved in organizing the actin system in cell motility and chemotaxis, in phagocytosis and macropinocytosis, at late steps of endosome processing, and in mitosis. In concert with a group of other proteins, the Arp2/3 complex plays a general role in the rapid activation and adaptation of the actin system to its multiple functions. This is Actin-related protein 2/3 complex subunit 2 (arcB) from Dictyostelium discoideum (Social amoeba).